The primary structure comprises 310 residues: Olfactory receptor 5H14 (310 aa).

At 1–28 (MEEENATLLTEFVLTGFLYQPQWKIPLF) the chain is on the extracellular side. N5 carries an N-linked (GlcNAc...) asparagine glycan. Residues 29 to 49 (LAFLVIYLITIMGNLGLIAVI) traverse the membrane as a helical segment. Residues 50-56 (WKDPHLH) lie on the Cytoplasmic side of the membrane. Residues 57-77 (IPMYLLLGNLAFVDALLSSSV) traverse the membrane as a helical segment. The Extracellular portion of the chain corresponds to 78–98 (TLKMLINFLAKSKMISLSECK). Cysteines 97 and 179 form a disulfide. The chain crosses the membrane as a helical span at residues 99–119 (IQLFSFAISVTTECFLLATMA). Topologically, residues 120-143 (YDRYVAICKPLLYPAIMTNGLCIR) are cytoplasmic. A helical transmembrane segment spans residues 144–164 (LLILSYVGGLLHALIHEGFLF). At 165-195 (RLTFCNSNIIQHFYCDIIPLLKISYTDSSIN) the chain is on the extracellular side. Residues 196-216 (FLMVFIFAGSIQVFTIGTVLI) form a helical membrane-spanning segment. The Cytoplasmic segment spans residues 217-240 (SYIFVLYTILKKKSVKGMRKAFST). The helical transmembrane segment at 241–261 (CGAHLLSVSLYYGPLAFMYMG) threads the bilayer. Topologically, residues 262 to 271 (SASPQADDQD) are extracellular. The chain crosses the membrane as a helical span at residues 272–292 (MMESLFYTVIVPLLNPMIYSL). The Cytoplasmic segment spans residues 293–310 (RNKQVIASFTKMFKRNDV).

The protein belongs to the G-protein coupled receptor 1 family.

Its subcellular location is the cell membrane. Its function is as follows. Odorant receptor. This Homo sapiens (Human) protein is Olfactory receptor 5H14 (OR5H14).